A 480-amino-acid polypeptide reads, in one-letter code: Zinc finger protein ztf-6 (480 aa).

Disordered regions lie at residues 92–160, 174–198, 282–307, and 328–351; these read CHDS…TMMV, GTNG…EEHD, LDAG…PTAS, and DANT…MKVP. 4 stretches are compositionally biased toward low complexity: residues 95–105, 131–145, 174–187, and 286–296; these read SATSTTTTVSH, SSIE…SSSV, GTNG…TSSS, and SSENDGSTSSS. 2 consecutive C2H2-type zinc fingers follow at residues 359–383 and 388–410; these read YICP…FVTH and FNCD…QKIH. Residues 416–441 form a C2H2-type 3; degenerate zinc finger; it reads YQCRGCGTNYTTQNGLRLHRQRNPAC. The disordered stretch occupies residues 461-480; the sequence is ALSGPLSKNSSPTKQMVSAP.

In terms of biological role, probable transcription factor, involved in regulation of dopamine neuron lineage specification. May play a role in maintaining robustness of the Wnt/beta-catenin asymmetry pathway. This Caenorhabditis elegans protein is Zinc finger protein ztf-6.